Reading from the N-terminus, the 451-residue chain is Phosphoglucosamine mutase (451 aa).

The active-site Phosphoserine intermediate is the serine 101. Mg(2+) contacts are provided by serine 101, aspartate 240, aspartate 242, and aspartate 244. A Phosphoserine modification is found at serine 101.

This sequence belongs to the phosphohexose mutase family. Requires Mg(2+) as cofactor. Activated by phosphorylation.

It catalyses the reaction alpha-D-glucosamine 1-phosphate = D-glucosamine 6-phosphate. Its function is as follows. Catalyzes the conversion of glucosamine-6-phosphate to glucosamine-1-phosphate. The sequence is that of Phosphoglucosamine mutase from Alkalilimnicola ehrlichii (strain ATCC BAA-1101 / DSM 17681 / MLHE-1).